We begin with the raw amino-acid sequence, 201 residues long: NAD(P)H dehydrogenase (quinone) (201 aa).

A Flavodoxin-like domain is found at 4-192; that stretch reads VLVLYYSSYG…TIARFQGQHI (189 aa). FMN is bound by residues 10–15 and 80–82; these read SSYGHV and TRF. Tyr-12 contributes to the NAD(+) binding site. Substrate is bound at residue Trp-100. FMN contacts are provided by residues 115 to 121 and His-136; that span reads STASQHG.

This sequence belongs to the WrbA family. FMN serves as cofactor.

The enzyme catalyses a quinone + NADH + H(+) = a quinol + NAD(+). The catalysed reaction is a quinone + NADPH + H(+) = a quinol + NADP(+). The protein is NAD(P)H dehydrogenase (quinone) of Chromohalobacter salexigens (strain ATCC BAA-138 / DSM 3043 / CIP 106854 / NCIMB 13768 / 1H11).